The sequence spans 285 residues: Bifunctional protein FolD (285 aa).

NADP(+) contacts are provided by residues 164–166 (GRS), Ser-193, and Ile-234.

It belongs to the tetrahydrofolate dehydrogenase/cyclohydrolase family. In terms of assembly, homodimer.

The enzyme catalyses (6R)-5,10-methylene-5,6,7,8-tetrahydrofolate + NADP(+) = (6R)-5,10-methenyltetrahydrofolate + NADPH. The catalysed reaction is (6R)-5,10-methenyltetrahydrofolate + H2O = (6R)-10-formyltetrahydrofolate + H(+). It participates in one-carbon metabolism; tetrahydrofolate interconversion. Functionally, catalyzes the oxidation of 5,10-methylenetetrahydrofolate to 5,10-methenyltetrahydrofolate and then the hydrolysis of 5,10-methenyltetrahydrofolate to 10-formyltetrahydrofolate. This is Bifunctional protein FolD from Desulfovibrio desulfuricans (strain ATCC 27774 / DSM 6949 / MB).